The sequence spans 743 residues: MMTQANAYFYDGADVALLNGQYTDVFSLLGMHSANEGKALIVRCFLRNAISVDVISIKDGRKVASLDKVNEQGLFAGTLGRRVKPFLYLLRVEYPLCQLDIVDPYQFDSLLNSDDIYLFGEGSAERAYEFLGANWRQTQGVEGVHFCVWAPNAKRVSVVGDFNHWDDTRHVMRQHLANGLWELFLPNVVEGAHYKFDLVYQNGERHTKSDPMATQMECAPHNASIVPPKAHHSWNDTAWMSKRAATAWHKAPMSAYEVHLGSWRRKGEQGEQYLDYQDLIEQLIPYVKEQGFTHIELMPISEFPFDGSWGYQPVGLYAPTHRFGDANGLKAFVDACHQAGIGIILDWVSAHFPKDPHGLVRFDGTCLYEHEDPRKGTHPDWDTLIYNYDRGEVRSFLLSNACYWLREFHFDGLRLDAVSSMLYLDYSREPGQWLPNAYGGRENLEAISFLQILNQRLYQAFPGICMIAEESTAFAGVTKPTDQQGLGFGFKWNMGWMNDSLSYLGRDPLYRQFHHHQLTFSLMYAYTEQFMLSVSHDEVVHGKGSLLHKIPGDDWQKFATLRAYYGFMWGHPGKKLLFMGCEFGQRNEWNHNQSLDWHLLAYEPHQGVQRWLKDLNHLYQAMPALSVQDYEGAGFSWLDCENSRDSIFTFVRYGLAGDAPLVFVINMTPQLHTGFRIGLPLAGDYREYLNSDSQIYGGSNQGNAGTVVAESLPWQGMAQSALITVPPLGCLVIGPATGLAEAN.

Residue D416 is the Nucleophile of the active site. The active-site Proton donor is the E469.

Belongs to the glycosyl hydrolase 13 family. GlgB subfamily. Monomer.

The catalysed reaction is Transfers a segment of a (1-&gt;4)-alpha-D-glucan chain to a primary hydroxy group in a similar glucan chain.. Its pathway is glycan biosynthesis; glycogen biosynthesis. In terms of biological role, catalyzes the formation of the alpha-1,6-glucosidic linkages in glycogen by scission of a 1,4-alpha-linked oligosaccharide from growing alpha-1,4-glucan chains and the subsequent attachment of the oligosaccharide to the alpha-1,6 position. This Shewanella baltica (strain OS155 / ATCC BAA-1091) protein is 1,4-alpha-glucan branching enzyme GlgB.